The following is a 290-amino-acid chain: Probable proteasome subunit beta type-6 (290 aa).

Belongs to the peptidase T1B family. The 26S proteasome consists of a 20S proteasome core and two 19S regulatory subunits. The 20S proteasome core is composed of 28 subunits that are arranged in four stacked rings, resulting in a barrel-shaped structure. The two end rings are each formed by seven alpha subunits, and the two central rings are each formed by seven beta subunits. The catalytic chamber with the active sites is on the inside of the barrel.

The protein resides in the cytoplasm. Its subcellular location is the nucleus. Functionally, non-catalytic component of the proteasome which degrades poly-ubiquitinated proteins in the cytoplasm and in the nucleus. It is essential for the regulated turnover of proteins and for the removal of misfolded proteins. The proteasome is a multicatalytic proteinase complex that is characterized by its ability to cleave peptides with Arg, Phe, Tyr, Leu, and Glu adjacent to the leaving group at neutral or slightly basic pH. It has an ATP-dependent proteolytic activity. In Encephalitozoon cuniculi (strain GB-M1) (Microsporidian parasite), this protein is Probable proteasome subunit beta type-6 (PRE7).